A 115-amino-acid chain; its full sequence is Large ribosomal subunit protein bL19 (115 aa).

This sequence belongs to the bacterial ribosomal protein bL19 family.

This protein is located at the 30S-50S ribosomal subunit interface and may play a role in the structure and function of the aminoacyl-tRNA binding site. This is Large ribosomal subunit protein bL19 from Caldanaerobacter subterraneus subsp. tengcongensis (strain DSM 15242 / JCM 11007 / NBRC 100824 / MB4) (Thermoanaerobacter tengcongensis).